Consider the following 620-residue polypeptide: MDSHTLLQALIYLGSAALIVPIAVRLGLGSVLGYLIAGCIIGPWGLRLVTDAESILHFAEIGVVLMLFVIGLELDPQRLWKLRASVFGGGALQMVVCGGLIGLFCMFLGLRWQVAELIGMTLALSSTAIAMQAMNERNLTVSQVGRSAFAVLLFQDIAAIPLVAMIPLLAASGASTTLGAFALSALKVAGALALVVLLGRYVTRPALRFVARSGLREVFSAVALFLVFGFGLLLEEVGLSMAMGAFLAGVLLASSEYRHALESDIEPFKGLLLGLFFIGVGMSIDFGTLVENPLRILLLLAGFLAIKIVMLWLVARTLGVPAKQRRWFAVLLGQGSEFAFVVFGAAQMADVLEPEWAKALTLAVALSMAATPIFLVLLTRMEKTATGEAREADEIDEEQPRVIVAGFGRFGQIAGRLLLSSGVKMVVLDHDPDHIETLRKFGMKVFYGDATRMDLLESAGAAKAEVLINAIDDPQTNLQLSELVKTHFPHLQIIARARDVDHYIRLRQAGVAMPERETFEGALKSGRQALEALGLGRYEARERADLFCHFNTRMVEEMAKGENDPLSRAAAYKRTSAMLSEIITEDREHLSLIQRHGWQGTAEGKHSGKAADEPEVKPSI.

The Periplasmic portion of the chain corresponds to 1–3 (MDS). The chain crosses the membrane as a helical span at residues 4-24 (HTLLQALIYLGSAALIVPIAV). Arg-25 is a topological domain (cytoplasmic). A helical membrane pass occupies residues 26-46 (LGLGSVLGYLIAGCIIGPWGL). Residues 47-53 (RLVTDAE) lie on the Periplasmic side of the membrane. The chain crosses the membrane as a helical span at residues 54 to 74 (SILHFAEIGVVLMLFVIGLEL). The Cytoplasmic segment spans residues 75–89 (DPQRLWKLRASVFGG). A helical transmembrane segment spans residues 90–110 (GALQMVVCGGLIGLFCMFLGL). At 111 to 113 (RWQ) the chain is on the periplasmic side. The chain crosses the membrane as a helical span at residues 114–134 (VAELIGMTLALSSTAIAMQAM). At 135–148 (NERNLTVSQVGRSA) the chain is on the cytoplasmic side. Residues 149-169 (FAVLLFQDIAAIPLVAMIPLL) form a helical membrane-spanning segment. At 170 to 177 (AASGASTT) the chain is on the periplasmic side. The helical transmembrane segment at 178–198 (LGAFALSALKVAGALALVVLL) threads the bilayer. The Cytoplasmic segment spans residues 199–213 (GRYVTRPALRFVARS). Residues 214 to 233 (GLREVFSAVALFLVFGFGLL) traverse the membrane as a helical segment. Residues 234-236 (LEE) lie on the Periplasmic side of the membrane. The helical transmembrane segment at 237-254 (VGLSMAMGAFLAGVLLAS) threads the bilayer. Residues 255-269 (SEYRHALESDIEPFK) lie on the Cytoplasmic side of the membrane. A helical membrane pass occupies residues 270–290 (GLLLGLFFIGVGMSIDFGTLV). Over 291-293 (ENP) the chain is Periplasmic. A helical transmembrane segment spans residues 294–314 (LRILLLLAGFLAIKIVMLWLV). At 315–326 (ARTLGVPAKQRR) the chain is on the cytoplasmic side. A helical membrane pass occupies residues 327–347 (WFAVLLGQGSEFAFVVFGAAQ). Topologically, residues 348–358 (MADVLEPEWAK) are periplasmic. The chain crosses the membrane as a helical span at residues 359 to 379 (ALTLAVALSMAATPIFLVLLT). Topologically, residues 380 to 620 (RMEKTATGEA…ADEPEVKPSI (241 aa)) are cytoplasmic. The 120-residue stretch at 399–518 (QPRVIVAGFG…AGVAMPERET (120 aa)) folds into the RCK N-terminal domain. Positions 599–620 (QGTAEGKHSGKAADEPEVKPSI) are disordered. Basic and acidic residues predominate over residues 603–620 (EGKHSGKAADEPEVKPSI).

It belongs to the monovalent cation:proton antiporter 2 (CPA2) transporter (TC 2.A.37) family. KefC subfamily. As to quaternary structure, homodimer. Interacts with the regulatory subunit KefF.

It is found in the cell inner membrane. Its function is as follows. Pore-forming subunit of a potassium efflux system that confers protection against electrophiles. Catalyzes K(+)/H(+) antiport. The polypeptide is Glutathione-regulated potassium-efflux system protein KefC (Salmonella typhi).